Here is a 352-residue protein sequence, read N- to C-terminus: DNA polymerase IV (352 aa).

The 181-residue stretch at 6 to 186 (IIHIDMDAFY…LPLGKIPGVG (181 aa)) folds into the UmuC domain. Residues Asp10 and Asp104 each contribute to the Mg(2+) site. Glu105 is an active-site residue.

This sequence belongs to the DNA polymerase type-Y family. In terms of assembly, monomer. Mg(2+) serves as cofactor.

The protein resides in the cytoplasm. It catalyses the reaction DNA(n) + a 2'-deoxyribonucleoside 5'-triphosphate = DNA(n+1) + diphosphate. In terms of biological role, poorly processive, error-prone DNA polymerase involved in untargeted mutagenesis. Copies undamaged DNA at stalled replication forks, which arise in vivo from mismatched or misaligned primer ends. These misaligned primers can be extended by PolIV. Exhibits no 3'-5' exonuclease (proofreading) activity. May be involved in translesional synthesis, in conjunction with the beta clamp from PolIII. In Neisseria meningitidis serogroup A / serotype 4A (strain DSM 15465 / Z2491), this protein is DNA polymerase IV.